The sequence spans 204 residues: Urease accessory protein UreG (204 aa).

Residue 11-18 (GPVGAGKH) participates in GTP binding.

This sequence belongs to the SIMIBI class G3E GTPase family. UreG subfamily. Homodimer. UreD, UreF and UreG form a complex that acts as a GTP-hydrolysis-dependent molecular chaperone, activating the urease apoprotein by helping to assemble the nickel containing metallocenter of UreC. The UreE protein probably delivers the nickel.

Its subcellular location is the cytoplasm. Functionally, facilitates the functional incorporation of the urease nickel metallocenter. This process requires GTP hydrolysis, probably effectuated by UreG. The protein is Urease accessory protein UreG of Staphylococcus xylosus.